Consider the following 456-residue polypeptide: Bifunctional protein GlmU (456 aa).

The tract at residues 1-230 is pyrophosphorylase; that stretch reads MDKRFAVILA…FQETLGVNDR (230 aa). Residues 9–12, K23, Q73, and 78–79 contribute to the UDP-N-acetyl-alpha-D-glucosamine site; these read LAAG and GT. D103 serves as a coordination point for Mg(2+). Positions 140, 155, 170, and 228 each coordinate UDP-N-acetyl-alpha-D-glucosamine. Mg(2+) is bound at residue N228. Residues 231–251 form a linker region; the sequence is VALSQAEMYMKERINKRHMQN. The tract at residues 252–456 is N-acetyltransferase; the sequence is GVTLIDPMNT…EDYVKNIHKK (205 aa). R333 and K351 together coordinate UDP-N-acetyl-alpha-D-glucosamine. H363 acts as the Proton acceptor in catalysis. UDP-N-acetyl-alpha-D-glucosamine-binding residues include Y366 and N377. Acetyl-CoA-binding positions include 386 to 387, A423, and R440; that span reads NY.

The protein in the N-terminal section; belongs to the N-acetylglucosamine-1-phosphate uridyltransferase family. This sequence in the C-terminal section; belongs to the transferase hexapeptide repeat family. In terms of assembly, homotrimer. Mg(2+) serves as cofactor.

The protein localises to the cytoplasm. The enzyme catalyses alpha-D-glucosamine 1-phosphate + acetyl-CoA = N-acetyl-alpha-D-glucosamine 1-phosphate + CoA + H(+). The catalysed reaction is N-acetyl-alpha-D-glucosamine 1-phosphate + UTP + H(+) = UDP-N-acetyl-alpha-D-glucosamine + diphosphate. It functions in the pathway nucleotide-sugar biosynthesis; UDP-N-acetyl-alpha-D-glucosamine biosynthesis; N-acetyl-alpha-D-glucosamine 1-phosphate from alpha-D-glucosamine 6-phosphate (route II): step 2/2. The protein operates within nucleotide-sugar biosynthesis; UDP-N-acetyl-alpha-D-glucosamine biosynthesis; UDP-N-acetyl-alpha-D-glucosamine from N-acetyl-alpha-D-glucosamine 1-phosphate: step 1/1. It participates in bacterial outer membrane biogenesis; LPS lipid A biosynthesis. Catalyzes the last two sequential reactions in the de novo biosynthetic pathway for UDP-N-acetylglucosamine (UDP-GlcNAc). The C-terminal domain catalyzes the transfer of acetyl group from acetyl coenzyme A to glucosamine-1-phosphate (GlcN-1-P) to produce N-acetylglucosamine-1-phosphate (GlcNAc-1-P), which is converted into UDP-GlcNAc by the transfer of uridine 5-monophosphate (from uridine 5-triphosphate), a reaction catalyzed by the N-terminal domain. In Bacillus velezensis (strain DSM 23117 / BGSC 10A6 / LMG 26770 / FZB42) (Bacillus amyloliquefaciens subsp. plantarum), this protein is Bifunctional protein GlmU.